An 83-amino-acid polypeptide reads, in one-letter code: Hainantoxin-III 11 (83 aa).

Residues 1–21 (MKASMFLALAGLVLLFVVGYA) form the signal peptide. Positions 22 to 48 (SESEEKDFPRELLSKIFAVDDFKGEER) are excised as a propeptide. 3 cysteine pairs are disulfide-bonded: cysteine 50-cysteine 65, cysteine 57-cysteine 70, and cysteine 64-cysteine 77. Leucine amide is present on leucine 81.

This sequence belongs to the neurotoxin 10 (Hwtx-1) family. 15 (Hntx-3) subfamily. Monomer. As to expression, expressed by the venom gland.

It localises to the secreted. Its function is as follows. Selective antagonist of neuronal tetrodotoxin (TTX)-sensitive voltage-gated sodium channels (IC(50)=1270 nM on Nav1.1/SCN1A, 270 nM on Nav1.2/SCN2A, 491 nM on Nav1.3/SCN3A and 232 nM on Nav1.7/SCN9A). This toxin suppress Nav1.7 current amplitude without significantly altering the activation, inactivation, and repriming kinetics. Short extreme depolarizations partially activate the toxin-bound channel, indicating voltage-dependent inhibition of this toxin. This toxin increases the deactivation of the Nav1.7 current after extreme depolarizations. The toxin-Nav1.7 complex is gradually dissociated upon prolonged strong depolarizations in a voltage-dependent manner, and the unbound toxin rebinds to Nav1.7 after a long repolarization. Moreover, analysis of chimeric channels showed that the DIIS3-S4 linker is critical for toxin binding to Nav1.7. These data are consistent with this toxin interacting with Nav1.7 site 4 and trapping the domain II voltage sensor in the closed state. The chain is Hainantoxin-III 11 from Cyriopagopus hainanus (Chinese bird spider).